We begin with the raw amino-acid sequence, 489 residues long: MEKLSILTERQQTELNYAIIQYLQPLCQQDNHALLDQLSKILNIDQWTQESNNVEKVDNYLEKRWSTVLRLQKKIIDLENEISNLNNIINSSNSDNNGIVLSKDKINWIPKGTAKQSYQCENIVTTVKLHPNLPLVLNGCNDGNLYIWNISNDDNTIPEKMIKAHTRAINKICFTYKKPYYLATCSSDLTIKIWDEKFNHIRTLNGHEHTVSSIQFSPIDNSILYSVSRDKNIRVWDIFQGISLKSFVGHSEWCRDLDIVSSDNNGDFVLTCSNDQSARLSHASSGAGLAMIVGHGHVVETVKFLPALQANKILDEYITKNIEQFPTIPLELLKDKTYNQLGFKYCITASRDNTIKLWLIPPPKIAPHRPPLPSKYNNSQSWMIAELRGHSSWVKCLCVHPNGRFIISGSDDKTIKFWDLSSLLETGSVNVVKTIIGHDGFINDIDFARLKEASDSTPTSQEDLLKEVEKRMRCLFISGSADNSIKLWN.

A coiled-coil region spans residues 66–98 (STVLRLQKKIIDLENEISNLNNIINSSNSDNNG). WD repeat units lie at residues 119–158 (QCEN…NTIP), 164–205 (AHTR…RTLN), 206–246 (GHEH…SLKS), 249–291 (GHSE…GLAM), 328–368 (IPLE…IAPH), 389–428 (GHSS…ETGS), and 437–486 (GHDG…NSIK).

The protein belongs to the WD repeat LIS1/nudF family. In terms of assembly, self-associates. Interacts with NDL1 and dynein.

The protein localises to the cytoplasm. The protein resides in the cytoskeleton. It is found in the spindle pole. Functionally, positively regulates the activity of the minus-end directed microtubule motor protein dynein. Plays a central role in positioning the mitotic spindle at the bud neck during cell division. Targets cytoplasmic dynein to microtubule plus ends, thereby promoting dynein-mediated microtubule sliding along the bud cortex and consequently the movement of the mitotic spindle to the bud neck. The chain is Nuclear distribution protein PAC1 from Candida dubliniensis (strain CD36 / ATCC MYA-646 / CBS 7987 / NCPF 3949 / NRRL Y-17841) (Yeast).